An 85-amino-acid polypeptide reads, in one-letter code: CRISPR-associated endoribonuclease Cas2 (85 aa).

Asp-8 is a binding site for Mg(2+).

This sequence belongs to the CRISPR-associated endoribonuclease Cas2 protein family. Homodimer, forms a heterotetramer with a Cas1 homodimer. It depends on Mg(2+) as a cofactor.

In terms of biological role, CRISPR (clustered regularly interspaced short palindromic repeat), is an adaptive immune system that provides protection against mobile genetic elements (viruses, transposable elements and conjugative plasmids). CRISPR clusters contain sequences complementary to antecedent mobile elements and target invading nucleic acids. CRISPR clusters are transcribed and processed into CRISPR RNA (crRNA). Functions as a ssRNA-specific endoribonuclease. Involved in the integration of spacer DNA into the CRISPR cassette. The sequence is that of CRISPR-associated endoribonuclease Cas2 from Pyrococcus furiosus (strain ATCC 43587 / DSM 3638 / JCM 8422 / Vc1).